A 570-amino-acid polypeptide reads, in one-letter code: Rho GTPase-activating protein gacEE (570 aa).

In terms of domain architecture, PH spans 127-233; the sequence is NSDISGVLLK…WVTTINNCID (107 aa). In terms of domain architecture, C2 spans 224–343; it reads WVTTINNCID…PNGSEISLWL (120 aa). Ca(2+)-binding residues include Asp260, Asp266, Asp312, Asp314, and Asp320. The Rho-GAP domain occupies 381-567; that stretch reads NSLEAIVKNR…FVFENSQQIL (187 aa).

Requires Ca(2+) as cofactor.

The protein resides in the cytoplasm. In terms of biological role, rho GTPase-activating protein involved in the signal transduction pathway. This is Rho GTPase-activating protein gacEE (gacEE) from Dictyostelium discoideum (Social amoeba).